Here is a 736-residue protein sequence, read N- to C-terminus: Epithelial splicing regulatory protein 2 (736 aa).

3 RRM domains span residues 224–301, 325–405, and 659–736; these read TVIR…KATG, MIIR…RSTA, and ALVR…ACCE.

This sequence belongs to the ESRP family.

It is found in the nucleus. Functionally, mRNA splicing factor that regulates the formation of epithelial cell-specific isoforms. Specifically regulates the expression of FGFR2-IIIb, an epithelial cell-specific isoform of fgfr2. Acts by directly binding specific sequences in mRNAs. Binds the GU-rich sequence motifs in the ISE/ISS-3, a cis-element regulatory region present in the mRNA of fgfr2. The polypeptide is Epithelial splicing regulatory protein 2 (esrp2) (Danio rerio (Zebrafish)).